A 375-amino-acid polypeptide reads, in one-letter code: OVARIAN TUMOR DOMAIN-containing deubiquitinating enzyme 7 (375 aa).

Positions 1–18 (MAKTKQQKSKPKKQPHQK) are enriched in basic residues. The tract at residues 1-23 (MAKTKQQKSKPKKQPHQKQGKDC) is disordered. An OTU domain is found at 37–161 (LKIIQVTADG…GEHYNSVRSK (125 aa)). The active site involves aspartate 45. The active-site Nucleophile is cysteine 48. Histidine 154 is an active-site residue. The UBA-like domain occupies 202-250 (HVNAGAIKVVMSGSCCDNTEKAEQVLLQVNGDVDAAIEFLIADQGMESL). Polar residues-rich tracts occupy residues 251–264 (TENDTETASASDTI) and 290–305 (ASGNNSETVQAKCTTQ). Positions 251–306 (TENDTETASASDTINPKHASDSPMENTEQAREELIEEESASGNNSETVQAKCTTQT) are disordered. Positions 308–315 (DKKIPRNK) match the Nuclear localization signal motif.

This sequence belongs to the peptidase C85 family.

The protein resides in the nucleus. The catalysed reaction is Thiol-dependent hydrolysis of ester, thioester, amide, peptide and isopeptide bonds formed by the C-terminal Gly of ubiquitin (a 76-residue protein attached to proteins as an intracellular targeting signal).. Its function is as follows. Hydrolase that can remove conjugated ubiquitin from proteins in vitro and may therefore play an important regulatory role at the level of protein turnover by preventing degradation. Cysteine protease with a preference for 'Lys-63' over 'Lys-48' over 'Met-1' -linked ubiquitin (UB) tetramers as substrates. Also cleaves RUB-GST fusion. The polypeptide is OVARIAN TUMOR DOMAIN-containing deubiquitinating enzyme 7 (Arabidopsis thaliana (Mouse-ear cress)).